The primary structure comprises 454 residues: Membrane-bound lytic murein transglycosylase F (454 aa).

An N-terminal signal peptide occupies residues 1 to 24 (MRRPLRRVTVVLLWVALAIGVAWF). Residues 25–265 (YDYRRSMQSL…IYNRYYTAVD (241 aa)) form a non-LT domain region. The interval 266–454 (TFDYVDVKKF…YDILKQKKAV (189 aa)) is LT domain. The active site involves Glu311.

This sequence in the N-terminal section; belongs to the bacterial solute-binding protein 3 family. In the C-terminal section; belongs to the transglycosylase Slt family.

The protein localises to the cell outer membrane. It catalyses the reaction Exolytic cleavage of the (1-&gt;4)-beta-glycosidic linkage between N-acetylmuramic acid (MurNAc) and N-acetylglucosamine (GlcNAc) residues in peptidoglycan, from either the reducing or the non-reducing ends of the peptidoglycan chains, with concomitant formation of a 1,6-anhydrobond in the MurNAc residue.. Murein-degrading enzyme that degrades murein glycan strands and insoluble, high-molecular weight murein sacculi, with the concomitant formation of a 1,6-anhydromuramoyl product. Lytic transglycosylases (LTs) play an integral role in the metabolism of the peptidoglycan (PG) sacculus. Their lytic action creates space within the PG sacculus to allow for its expansion as well as for the insertion of various structures such as secretion systems and flagella. This is Membrane-bound lytic murein transglycosylase F from Desulfosudis oleivorans (strain DSM 6200 / JCM 39069 / Hxd3) (Desulfococcus oleovorans).